We begin with the raw amino-acid sequence, 368 residues long: Aminomethyltransferase (368 aa).

Belongs to the GcvT family. The glycine cleavage system is composed of four proteins: P, T, L and H.

It catalyses the reaction N(6)-[(R)-S(8)-aminomethyldihydrolipoyl]-L-lysyl-[protein] + (6S)-5,6,7,8-tetrahydrofolate = N(6)-[(R)-dihydrolipoyl]-L-lysyl-[protein] + (6R)-5,10-methylene-5,6,7,8-tetrahydrofolate + NH4(+). Functionally, the glycine cleavage system catalyzes the degradation of glycine. This Xylella fastidiosa (strain M12) protein is Aminomethyltransferase.